We begin with the raw amino-acid sequence, 244 residues long: Protein crossbronx (244 aa).

The region spanning 20 to 176 (QQEYKILAEY…VQENIKESKE (157 aa)) is the UBC core domain. Residues 209-244 (AGRSKQTEPSAQQGNGGHATGLSWVKEGEFKPLSIE) are disordered.

It belongs to the ubiquitin-conjugating enzyme family. FTS subfamily.

The protein is Protein crossbronx (cbx) of Drosophila sechellia (Fruit fly).